The primary structure comprises 133 residues: Large ribosomal subunit protein uL15 (133 aa).

The interval 1 to 64 (MGLENLKPAK…QPLQRRLPKI (64 aa)) is disordered.

This sequence belongs to the universal ribosomal protein uL15 family. As to quaternary structure, part of the 50S ribosomal subunit.

In terms of biological role, binds to the 23S rRNA. The chain is Large ribosomal subunit protein uL15 from Helicobacter pylori (strain Shi470).